Consider the following 230-residue polypeptide: Orotidine 5'-phosphate decarboxylase (230 aa).

Residues Asp-11, Lys-34, 61-70 (DLKLHDIPNT), Thr-117, Arg-179, Gln-188, Gly-208, and Arg-209 each bind substrate. The Proton donor role is filled by Lys-63.

This sequence belongs to the OMP decarboxylase family. Type 1 subfamily. As to quaternary structure, homodimer.

The catalysed reaction is orotidine 5'-phosphate + H(+) = UMP + CO2. It participates in pyrimidine metabolism; UMP biosynthesis via de novo pathway; UMP from orotate: step 2/2. In terms of biological role, catalyzes the decarboxylation of orotidine 5'-monophosphate (OMP) to uridine 5'-monophosphate (UMP). This is Orotidine 5'-phosphate decarboxylase from Streptococcus uberis (strain ATCC BAA-854 / 0140J).